The primary structure comprises 241 residues: Leucyl/phenylalanyl-tRNA--protein transferase (241 aa).

This sequence belongs to the L/F-transferase family.

Its subcellular location is the cytoplasm. The enzyme catalyses N-terminal L-lysyl-[protein] + L-leucyl-tRNA(Leu) = N-terminal L-leucyl-L-lysyl-[protein] + tRNA(Leu) + H(+). It catalyses the reaction N-terminal L-arginyl-[protein] + L-leucyl-tRNA(Leu) = N-terminal L-leucyl-L-arginyl-[protein] + tRNA(Leu) + H(+). The catalysed reaction is L-phenylalanyl-tRNA(Phe) + an N-terminal L-alpha-aminoacyl-[protein] = an N-terminal L-phenylalanyl-L-alpha-aminoacyl-[protein] + tRNA(Phe). Functions in the N-end rule pathway of protein degradation where it conjugates Leu, Phe and, less efficiently, Met from aminoacyl-tRNAs to the N-termini of proteins containing an N-terminal arginine or lysine. This is Leucyl/phenylalanyl-tRNA--protein transferase from Neisseria meningitidis serogroup C (strain 053442).